The following is a 309-amino-acid chain: MAATRHNERDGLSDLRRDRQRKSGKMAPSPSKRKERSEDRAKDRGKEKAPGKEGTDKDRGRDKARKRRSASSGSSSSSRSRSSSSSSSSSGSSSGSSSGSSSSSASSRSGSSSSSRSSSSSSSSGSPSPSRRRHDNRRRSRSKSKQPKRDEKERKRRSPSPRPTKVHIGRLTRNVTKDHILEIFSTYGKIKMIDMPVDRYHPHLSKGYAYVEFEAPEEAEKALKHMDGGQIDGQEITASAVLTPWPMRAMPRRFSPPRRMLPPPPMWRRSPPRMRRRSRSPRRRSPVRRRSRSPARRRHRSRSSSNSSR.

Composition is skewed to basic and acidic residues over residues 1–17 (MAAT…DLRR) and 35–61 (ERSE…DRGR). Disordered regions lie at residues 1–166 (MAAT…PTKV) and 249–309 (AMPR…NSSR). Low complexity predominate over residues 70-129 (ASSGSSSSSRSRSSSSSSSSSGSSSGSSSGSSSSSASSRSGSSSSSRSSSSSSSSGSPSP). Basic residues-rich tracts occupy residues 130-146 (SRRR…KSKQ), 154-166 (RKRR…PTKV), and 270-302 (SPPR…HRSR). One can recognise an RRM domain in the interval 164 to 243 (TKVHIGRLTR…QEITASAVLT (80 aa)).

The protein belongs to the splicing factor SR family. In terms of assembly, component of the active spliceosome.

It localises to the nucleus. It is found in the nucleus speckle. Its subcellular location is the cytoplasm. Component of a splicing-dependent multiprotein exon junction complex (EJC) deposited at splice junction on mRNAs. The EJC is a dynamic structure consisting of a few core proteins and several more peripheral nuclear and cytoplasmic associated factors that join the complex only transiently either during EJC assembly or during subsequent mRNA metabolism. Putative component of the spliceosome which enhances the formation of the ATP-dependent A complex of the spliceosome. May participate in mRNA 3'-end cleavage. Also mediates increase of mRNA abundance and translational efficiency. The protein is RNA-binding protein with serine-rich domain 1 (rnps1) of Xenopus tropicalis (Western clawed frog).